The primary structure comprises 208 residues: Platelet glycoprotein Ib beta chain (208 aa).

Positions 1-26 are cleaved as a signal peptide; the sequence is MGSGPRGAVSLLLLMLAPPSCPAADC. 2 disulfides stabilise this stretch: C26–C32 and C30–C39. One can recognise an LRRNT domain in the interval 27 to 55; that stretch reads PAPCSCAGTLVDCGRRGLTWASLPTSFPV. Residues 27-147 are Extracellular-facing; that stretch reads PAPCSCAGTL…RAACAPGPLC (121 aa). The LRR repeat unit spans residues 60–83; sequence LVLTGNNLTALPSGLLDALPAVRT. A glycan (N-linked (GlcNAc...) asparagine) is linked at N66. In terms of domain architecture, LRRCT spans 89–143; the sequence is NPWRCDCRLVPLRAWLAGRPERAPYRDLRCVAPPAVRGRLLPYLAEDDVRAACAP. 2 cysteine pairs are disulfide-bonded: C93–C118 and C95–C141. The chain crosses the membrane as a helical span at residues 148–172; the sequence is WGALAAELALLGLGLLHALLLVLLL. Residues 173 to 208 lie on the Cytoplasmic side of the membrane; the sequence is CRLRRLRARARARARAALRLSLTDPLVAEQDGTDES. At S193 the chain carries Phosphoserine; by PKA. A Phosphothreonine modification is found at T195.

Two GP-Ib beta are disulfide-linked to one GP-Ib alpha. GP-IX is complexed with the GP-Ib heterodimer via a non covalent linkage. Interacts with TRAF4.

The protein localises to the membrane. In terms of biological role, gp-Ib, a surface membrane protein of platelets, participates in the formation of platelet plugs by binding to von Willebrand factor, which is already bound to the subendothelium. This is Platelet glycoprotein Ib beta chain (GP1BB) from Papio cynocephalus (Yellow baboon).